The chain runs to 172 residues: Large ribosomal subunit protein uL10 (172 aa).

The protein belongs to the universal ribosomal protein uL10 family. As to quaternary structure, part of the ribosomal stalk of the 50S ribosomal subunit. The N-terminus interacts with L11 and the large rRNA to form the base of the stalk. The C-terminus forms an elongated spine to which 3 L12 dimers bind in a sequential fashion forming a heptameric L10(L12)2(L12)2(L12)2 complex.

In terms of biological role, forms part of the ribosomal stalk, playing a central role in the interaction of the ribosome with GTP-bound translation factors. This Agrobacterium fabrum (strain C58 / ATCC 33970) (Agrobacterium tumefaciens (strain C58)) protein is Large ribosomal subunit protein uL10.